The following is a 406-amino-acid chain: Succinylornithine transaminase (406 aa).

Lys-252 is subject to N6-(pyridoxal phosphate)lysine.

The protein belongs to the class-III pyridoxal-phosphate-dependent aminotransferase family. AstC subfamily. The cofactor is pyridoxal 5'-phosphate.

It catalyses the reaction N(2)-succinyl-L-ornithine + 2-oxoglutarate = N-succinyl-L-glutamate 5-semialdehyde + L-glutamate. It participates in amino-acid degradation; L-arginine degradation via AST pathway; L-glutamate and succinate from L-arginine: step 3/5. In terms of biological role, catalyzes the transamination of N(2)-succinylornithine and alpha-ketoglutarate into N(2)-succinylglutamate semialdehyde and glutamate. Can also act as an acetylornithine aminotransferase. The sequence is that of Succinylornithine transaminase from Escherichia coli O7:K1 (strain IAI39 / ExPEC).